We begin with the raw amino-acid sequence, 411 residues long: L-cysteine:1D-myo-inositol 2-amino-2-deoxy-alpha-D-glucopyranoside ligase (411 aa).

Cysteine 43 contacts Zn(2+). L-cysteinyl-5'-AMP-binding positions include 43–46, threonine 58, and 81–83; these read CGIT and NVT. Residues 45–55 carry the 'HIGH' region motif; sequence ITPYDATHLGH. The short motif at 186–191 is the 'ERGGDP' region element; sequence QRGGDP. An L-cysteinyl-5'-AMP-binding site is contributed by tryptophan 226. A Zn(2+)-binding site is contributed by cysteine 230. 248–250 provides a ligand contact to L-cysteinyl-5'-AMP; sequence GSD. Histidine 255 provides a ligand contact to Zn(2+). Isoleucine 282 is an L-cysteinyl-5'-AMP binding site. Residues 288-292 carry the 'KMSKS' region motif; that stretch reads KMSKS.

The protein belongs to the class-I aminoacyl-tRNA synthetase family. MshC subfamily. Monomer. Zn(2+) is required as a cofactor.

It carries out the reaction 1D-myo-inositol 2-amino-2-deoxy-alpha-D-glucopyranoside + L-cysteine + ATP = 1D-myo-inositol 2-(L-cysteinylamino)-2-deoxy-alpha-D-glucopyranoside + AMP + diphosphate + H(+). Catalyzes the ATP-dependent condensation of GlcN-Ins and L-cysteine to form L-Cys-GlcN-Ins. The protein is L-cysteine:1D-myo-inositol 2-amino-2-deoxy-alpha-D-glucopyranoside ligase of Mycobacterium marinum (strain ATCC BAA-535 / M).